The sequence spans 530 residues: Ubiquitin carboxyl-terminal hydrolase 17-like protein 21 (530 aa).

Residues 80 to 375 (AGLQNMGNTC…QAYVLFYIQK (296 aa)) enclose the USP domain. C89 acts as the Nucleophile in catalysis. H334 acts as the Proton acceptor in catalysis. Composition is skewed to basic and acidic residues over residues 382–392 (SESVSRGREPR) and 398–412 (DTDR…KRDH). Disordered regions lie at residues 382 to 412 (SESV…KRDH) and 477 to 530 (NHHP…LVCQ). A compositionally biased stretch (polar residues) spans 493-505 (TPTHQESMNTGTL). A compositionally biased stretch (basic residues) spans 510 to 524 (GRARRSKGKNKHSKR).

This sequence belongs to the peptidase C19 family. USP17 subfamily.

It is found in the nucleus. Its subcellular location is the endoplasmic reticulum. The catalysed reaction is Thiol-dependent hydrolysis of ester, thioester, amide, peptide and isopeptide bonds formed by the C-terminal Gly of ubiquitin (a 76-residue protein attached to proteins as an intracellular targeting signal).. In terms of biological role, deubiquitinating enzyme that removes conjugated ubiquitin from specific proteins to regulate different cellular processes that may include cell proliferation, progression through the cell cycle, apoptosis, cell migration, and the cellular response to viral infection. The chain is Ubiquitin carboxyl-terminal hydrolase 17-like protein 21 (USP17L21) from Homo sapiens (Human).